Here is a 119-residue protein sequence, read N- to C-terminus: Protein FAM24A-like (119 aa).

The signal sequence occupies residues 1–40; it reads MYKPFDLRTIITIIIGCGILTAMFLLIGLVLCLYSKISKA.

Belongs to the FAM24 family.

It is found in the secreted. The protein is Protein FAM24A-like of Mus musculus (Mouse).